The primary structure comprises 116 residues: Cell division protein FtsL (116 aa).

Topologically, residues 1 to 24 are cytoplasmic; the sequence is MMLTNRQIRVRLFESLKNSFFKKT. The chain crosses the membrane as a helical span at residues 25–45; that stretch reads VGISFALLFILLITAFSLIVV. Residues 46–116 lie on the Periplasmic side of the membrane; the sequence is RFEYKLQLNE…NEQKEELNNE (71 aa).

The protein belongs to the FtsL family. As to quaternary structure, part of a complex composed of FtsB, FtsL and FtsQ.

The protein localises to the cell inner membrane. Essential cell division protein. May link together the upstream cell division proteins, which are predominantly cytoplasmic, with the downstream cell division proteins, which are predominantly periplasmic. This is Cell division protein FtsL from Francisella tularensis subsp. tularensis (strain SCHU S4 / Schu 4).